We begin with the raw amino-acid sequence, 346 residues long: Glycerol-1-phosphate dehydrogenase [NAD(P)+] (346 aa).

NAD(+)-binding positions include 93 to 97 (GSIID) and 115 to 118 (TTAS). Asp-120 contributes to the substrate binding site. Residue Ser-124 participates in NAD(+) binding. Residue Asp-167 coordinates substrate. 2 residues coordinate Zn(2+): Asp-167 and His-247. Position 251 (His-251) interacts with substrate. Residue His-263 coordinates Zn(2+).

Belongs to the glycerol-1-phosphate dehydrogenase family. Zn(2+) serves as cofactor.

It is found in the cytoplasm. It carries out the reaction sn-glycerol 1-phosphate + NAD(+) = dihydroxyacetone phosphate + NADH + H(+). It catalyses the reaction sn-glycerol 1-phosphate + NADP(+) = dihydroxyacetone phosphate + NADPH + H(+). The protein operates within membrane lipid metabolism; glycerophospholipid metabolism. In terms of biological role, catalyzes the NAD(P)H-dependent reduction of dihydroxyacetonephosphate (DHAP or glycerone phosphate) to glycerol 1-phosphate (G1P). The G1P thus generated is used as the glycerophosphate backbone of phospholipids in the cellular membranes of Archaea. In Pyrococcus horikoshii (strain ATCC 700860 / DSM 12428 / JCM 9974 / NBRC 100139 / OT-3), this protein is Glycerol-1-phosphate dehydrogenase [NAD(P)+].